The chain runs to 212 residues: Cytidylate kinase (212 aa).

7 to 15 (GPAASGKGT) is a binding site for ATP.

The protein belongs to the cytidylate kinase family. Type 1 subfamily.

It localises to the cytoplasm. The catalysed reaction is CMP + ATP = CDP + ADP. The enzyme catalyses dCMP + ATP = dCDP + ADP. This is Cytidylate kinase from Bradyrhizobium sp. (strain ORS 278).